The following is a 59-amino-acid chain: Large ribosomal subunit protein uL30 (59 aa).

The protein belongs to the universal ribosomal protein uL30 family. In terms of assembly, part of the 50S ribosomal subunit.

This chain is Large ribosomal subunit protein uL30, found in Clostridium beijerinckii (strain ATCC 51743 / NCIMB 8052) (Clostridium acetobutylicum).